We begin with the raw amino-acid sequence, 280 residues long: Undecaprenyl-diphosphatase (280 aa).

Transmembrane regions (helical) follow at residues 1–21 (MTIL…FLPV), 41–61 (FVRA…LVLY), 87–107 (FDLY…GFLF), 115–135 (LGSV…MLFV), 147–167 (ITYP…FLPG), 186–206 (KAAA…ATLL), 225–245 (IVLL…IKFF), and 260–280 (YRIL…SLAV).

This sequence belongs to the UppP family.

The protein localises to the cell inner membrane. It catalyses the reaction di-trans,octa-cis-undecaprenyl diphosphate + H2O = di-trans,octa-cis-undecaprenyl phosphate + phosphate + H(+). Catalyzes the dephosphorylation of undecaprenyl diphosphate (UPP). Confers resistance to bacitracin. In Porphyromonas gingivalis (strain ATCC 33277 / DSM 20709 / CIP 103683 / JCM 12257 / NCTC 11834 / 2561), this protein is Undecaprenyl-diphosphatase.